A 147-amino-acid polypeptide reads, in one-letter code: MGLSPHLAVTLFCFLICTGNGIHGCNDSPLREIINTLNQVTEKGTPCTEMFVPDVLTATRNTTENELICRASRVLRKFYFPRDVPPCLKNKSGVLGELRKLCRGVSGLNSLRSCTVNESTLTTLKDFLESLKSILRGKYLQSCTSMS.

The first 24 residues, 1–24 (MGLSPHLAVTLFCFLICTGNGIHG), serve as a signal peptide directing secretion. Cysteines 47 and 87 form a disulfide. Residues Asn-61, Asn-90, and Asn-117 are each glycosylated (N-linked (GlcNAc...) asparagine).

This sequence belongs to the IL-4/IL-13 family.

The protein resides in the secreted. Its function is as follows. Participates in at least several B-cell activation processes as well as of other cell types. It is a costimulator of DNA-synthesis. It induces the expression of class II MHC molecules on resting B-cells. It enhances both secretion and cell surface expression of IgE and IgG1. It also regulates the expression of the low affinity Fc receptor for IgE (CD23) on both lymphocytes and monocytes. Positively regulates IL31RA expression in macrophages. Stimulates autophagy in dendritic cells by interfering with mTORC1 signaling and through the induction of RUFY4. The polypeptide is Interleukin-4 (Il4) (Rattus norvegicus (Rat)).